The primary structure comprises 245 residues: Balbiani ring A 28 kDa protein (245 aa).

Positions 1–16 (MKSIIKHILFVVLLIS) are cleaved as a signal peptide. Residues Ser33, Ser40, Ser92, Ser93, and Ser115 each carry the phosphoserine modification.

In terms of tissue distribution, salivary gland.

It is found in the secreted. In terms of biological role, used by the larvae to construct a supramolecular structure, the larval tube. The chain is Balbiani ring A 28 kDa protein from Chironomus thummi thummi (Midge).